A 1344-amino-acid chain; its full sequence is Eukaryotic translation initiation factor 3 subunit A (1344 aa).

Lys-68 carries the post-translational modification N6-acetyllysine. Residues 82–120 are a coiled coil; the sequence is NIKSLEDVVRAYLKLAEEKTEAAKEESQQMVLDIEDLDN. The PCI domain maps to 315-498; the sequence is MQRMSTRVLL…RTLSFGSDLN (184 aa). 2 positions are modified to phosphoserine: Ser-492 and Ser-584. The segment at 664–835 is interaction with EIF3B; it reads LDPDFIMAKQ…REERERAERA (172 aa). 3 disordered regions span residues 807–844, 866–1240, and 1252–1344; these read YREK…LREY, EERE…DRDD, and DLRD…TVRR. Basic and acidic residues-rich tracts occupy residues 866 to 1126, 1138 to 1240, 1252 to 1292, and 1300 to 1333; these read EERE…DDAR, GWRE…DRDD, DLRD…DPPR, and SRDR…TKNE. Ser-895 is modified (phosphoserine). The 1; truncated repeat unit spans residues 924-931; the sequence is DDERPHRR. Residues 924–1133 are 21 X 10 AA approximate tandem repeats of [DA]-[DE]-[ED]-R-[PLIGFSV]-[RPS]-[RW]-[RL]-[GNIHT]-[DGLPTAM]; the sequence is DDERPHRRDE…DARPGPWRPF (210 aa). Residues 932–941 form repeat 2; that stretch reads DEDRLRRLGG. The stretch at 942 to 951 is one 3; approximate repeat; sequence DDEERESSLR. At Ser-949 the chain carries Phosphoserine. A run of 17 repeats spans residues 953 to 962, 963 to 972, 973 to 982, 983 to 992, 993 to 1002, 1003 to 1012, 1013 to 1022, 1023 to 1032, 1033 to 1042, 1043 to 1052, 1054 to 1063, 1064 to 1073, 1074 to 1083, 1084 to 1093, 1094 to 1103, 1104 to 1113, and 1114 to 1123. At Ser-1028 the chain carries Phosphoserine. Residues 1124-1133 form a 21; approximate repeat; it reads DARPGPWRPF. 3 positions are modified to phosphoserine: Ser-1149, Ser-1159, and Ser-1223. Phosphoserine is present on residues Ser-1300 and Ser-1326.

This sequence belongs to the eIF-3 subunit A family. Interacts with KRT7. Component of the eukaryotic translation initiation factor 3 (eIF-3) complex, which is composed of 13 subunits: EIF3A, EIF3B, EIF3C, EIF3D, EIF3E, EIF3F, EIF3G, EIF3H, EIF3I, EIF3J, EIF3K, EIF3L and EIF3M. The eIF-3 complex appears to include 3 stable modules: module A is composed of EIF3A, EIF3B, EIF3G and EIF3I; module B is composed of EIF3F, EIF3H, and EIF3M; and module C is composed of EIF3C, EIF3D, EIF3E, EIF3L and EIF3K. EIF3C of module C binds EIF3B of module A and EIF3H of module B, thereby linking the three modules. EIF3J is a labile subunit that binds to the eIF-3 complex via EIF3B. The eIF-3 complex may interact with RPS6KB1 under conditions of nutrient depletion. Mitogenic stimulation may lead to binding and activation of a complex composed of MTOR and RPTOR, leading to phosphorylation and release of RPS6KB1 and binding of EIF4B to eIF-3. Interacts with EIF4G1 and PIWIL2. Phosphorylated. Phosphorylation is enhanced upon serum stimulation.

The protein localises to the cytoplasm. The protein resides in the cytoskeleton. It localises to the microtubule organizing center. It is found in the centrosome. Its subcellular location is the nucleus. Functionally, RNA-binding component of the eukaryotic translation initiation factor 3 (eIF-3) complex, which is required for several steps in the initiation of protein synthesis. The eIF-3 complex associates with the 40S ribosome and facilitates the recruitment of eIF-1, eIF-1A, eIF-2:GTP:methionyl-tRNAi and eIF-5 to form the 43S pre-initiation complex (43S PIC). The eIF-3 complex stimulates mRNA recruitment to the 43S PIC and scanning of the mRNA for AUG recognition. The eIF-3 complex is also required for disassembly and recycling of post-termination ribosomal complexes and subsequently prevents premature joining of the 40S and 60S ribosomal subunits prior to initiation. The eIF-3 complex specifically targets and initiates translation of a subset of mRNAs involved in cell proliferation, including cell cycling, differentiation and apoptosis, and uses different modes of RNA stem-loop binding to exert either translational activation or repression. This is Eukaryotic translation initiation factor 3 subunit A (Eif3a) from Mus musculus (Mouse).